Here is an 80-residue protein sequence, read N- to C-terminus: DNA-binding protein HU-like (80 aa).

It belongs to the bacterial histone-like protein family.

In terms of biological role, histone-like DNA-binding protein which is capable of wrapping DNA to stabilize it, and thus to prevent its denaturation under extreme environmental conditions. The polypeptide is DNA-binding protein HU-like (Rickettsia rickettsii (strain Sheila Smith)).